Here is a 437-residue protein sequence, read N- to C-terminus: Ribosomal protein uS12 methylthiotransferase RimO (437 aa).

The MTTase N-terminal domain maps to threonine 9–alanine 124. Cysteine 18, cysteine 56, cysteine 90, cysteine 151, cysteine 155, and cysteine 158 together coordinate [4Fe-4S] cluster. A Radical SAM core domain is found at threonine 137–glutamate 367. Residues glutamate 370–lysine 437 enclose the TRAM domain.

The protein belongs to the methylthiotransferase family. RimO subfamily. It depends on [4Fe-4S] cluster as a cofactor.

It localises to the cytoplasm. The catalysed reaction is L-aspartate(89)-[ribosomal protein uS12]-hydrogen + (sulfur carrier)-SH + AH2 + 2 S-adenosyl-L-methionine = 3-methylsulfanyl-L-aspartate(89)-[ribosomal protein uS12]-hydrogen + (sulfur carrier)-H + 5'-deoxyadenosine + L-methionine + A + S-adenosyl-L-homocysteine + 2 H(+). Catalyzes the methylthiolation of an aspartic acid residue of ribosomal protein uS12. The sequence is that of Ribosomal protein uS12 methylthiotransferase RimO from Cytophaga hutchinsonii (strain ATCC 33406 / DSM 1761 / CIP 103989 / NBRC 15051 / NCIMB 9469 / D465).